Here is a 346-residue protein sequence, read N- to C-terminus: Phosphoribosylformylglycinamidine cyclo-ligase (346 aa).

Belongs to the AIR synthase family.

The protein resides in the cytoplasm. It carries out the reaction 2-formamido-N(1)-(5-O-phospho-beta-D-ribosyl)acetamidine + ATP = 5-amino-1-(5-phospho-beta-D-ribosyl)imidazole + ADP + phosphate + H(+). It participates in purine metabolism; IMP biosynthesis via de novo pathway; 5-amino-1-(5-phospho-D-ribosyl)imidazole from N(2)-formyl-N(1)-(5-phospho-D-ribosyl)glycinamide: step 2/2. The chain is Phosphoribosylformylglycinamidine cyclo-ligase from Geobacillus sp. (strain WCH70).